Here is a 453-residue protein sequence, read N- to C-terminus: Putative dipeptidase UREG_03382 (453 aa).

A disordered region spans residues 1-33; it reads MSTRDHVKQSPMPVQEGYPRSSKEFSPPSSRSR. A helical membrane pass occupies residues 41–63; it reads LTMSLLIAAGAATFSKYIFPLGS. The Zn(2+) site is built by H95, D97, and E208. Cysteines 147 and 223 form a disulfide. A substrate-binding site is contributed by H221. H265 and H286 together coordinate Zn(2+). 2 residues coordinate substrate: R297 and D357. N370 and N443 each carry an N-linked (GlcNAc...) asparagine glycan.

This sequence belongs to the metallo-dependent hydrolases superfamily. Peptidase M19 family. Requires Zn(2+) as cofactor.

It localises to the membrane. It catalyses the reaction an L-aminoacyl-L-amino acid + H2O = 2 an L-alpha-amino acid. Hydrolyzes a wide range of dipeptides. This is Putative dipeptidase UREG_03382 from Uncinocarpus reesii (strain UAMH 1704).